Here is a 489-residue protein sequence, read N- to C-terminus: ATF/CREB activator 1 (489 aa).

The region spanning 384-447 is the bZIP domain; it reads AWKRARLLER…QKMKKISRLH (64 aa). Residues 386 to 406 form a basic motif region; sequence KRARLLERNRIAASKCRQRKK. The leucine-zipper stretch occupies residues 412 to 419; that stretch reads LQREFDQI.

Belongs to the bZIP family.

It is found in the nucleus. Transcriptional activator of promoters containing ATF/CREB sites. Can independently stimulate transcription through ATF/CREB sites. Important for a variety of biological functions including growth on non-optimal carbon sources. Regulates the expression of COS8. Has efficient silencing blocking activities. The polypeptide is ATF/CREB activator 1 (ACA1) (Saccharomyces cerevisiae (strain ATCC 204508 / S288c) (Baker's yeast)).